Consider the following 650-residue polypeptide: Acetyl-coenzyme A synthetase (650 aa).

CoA-binding positions include 191–194 (RGGR), T311, and N335. ATP is bound by residues 387–389 (GEP), 411–416 (DTWWQT), D500, and R515. S523 provides a ligand contact to CoA. Position 526 (R526) interacts with ATP. 3 residues coordinate Mg(2+): V537, H539, and V542. CoA is bound at residue R584. K609 carries the post-translational modification N6-acetyllysine.

It belongs to the ATP-dependent AMP-binding enzyme family. Mg(2+) is required as a cofactor. Post-translationally, acetylated. Deacetylation by the SIR2-homolog deacetylase activates the enzyme.

It catalyses the reaction acetate + ATP + CoA = acetyl-CoA + AMP + diphosphate. Catalyzes the conversion of acetate into acetyl-CoA (AcCoA), an essential intermediate at the junction of anabolic and catabolic pathways. AcsA undergoes a two-step reaction. In the first half reaction, AcsA combines acetate with ATP to form acetyl-adenylate (AcAMP) intermediate. In the second half reaction, it can then transfer the acetyl group from AcAMP to the sulfhydryl group of CoA, forming the product AcCoA. The polypeptide is Acetyl-coenzyme A synthetase (Shewanella amazonensis (strain ATCC BAA-1098 / SB2B)).